Here is a 323-residue protein sequence, read N- to C-terminus: V-type ATP synthase subunit C (323 aa).

Belongs to the V-ATPase V0D/AC39 subunit family.

Functionally, produces ATP from ADP in the presence of a proton gradient across the membrane. The chain is V-type ATP synthase subunit C from Thermus thermophilus (strain ATCC BAA-163 / DSM 7039 / HB27).